Consider the following 295-residue polypeptide: Glutamyl-Q tRNA(Asp) synthetase (295 aa).

L-glutamate is bound by residues 9-13 (RFAPT) and Glu-45. Positions 12 to 22 (PTPSGFLHFGS) match the 'HIGH' region motif. Zn(2+) contacts are provided by Cys-101, Cys-103, Tyr-115, and Cys-119. Positions 172 and 190 each coordinate L-glutamate. Positions 228–232 (KLGKS) match the 'KMSKS' region motif. Lys-231 is a binding site for ATP.

This sequence belongs to the class-I aminoacyl-tRNA synthetase family. GluQ subfamily. Zn(2+) is required as a cofactor.

Functionally, catalyzes the tRNA-independent activation of glutamate in presence of ATP and the subsequent transfer of glutamate onto a tRNA(Asp). Glutamate is transferred on the 2-amino-5-(4,5-dihydroxy-2-cyclopenten-1-yl) moiety of the queuosine in the wobble position of the QUC anticodon. The chain is Glutamyl-Q tRNA(Asp) synthetase from Pseudomonas putida (strain GB-1).